The sequence spans 82 residues: uncharacterized protein (82 aa).

The signal sequence occupies residues Met1–Ala19.

This is an uncharacterized protein from Rickettsia prowazekii (strain Madrid E).